The primary structure comprises 354 residues: Stimulator of interferon genes protein 3 (354 aa).

Transmembrane regions (helical) follow at residues 20 to 40 (VTFA…FALW), 48 to 68 (INFV…GELI), 101 to 121 (YGSC…YALL), and 132 to 152 (YGIF…IVGI). The 3',3'-cGAMP site is built by Asn178, Tyr183, Arg250, Ile251, Lys253, Glu272, Ser275, and Asn276.

It belongs to the STING family.

It localises to the membrane. Functionally, facilitator of innate immune signaling that acts as a sensor of second messenger signals produced by cyclic GMP-AMP synthase-like receptors (cGLRs) and promotes the production of type I interferon. Innate immune response is triggered in response to nucleotides from viruses and bacteria delivered to the cytoplasm. Acts by binding cyclic dinucleotides: recognizes and binds cyclic 3'-3' linked cGAMP (3'-3'-cGAMP), cyclic di-AMP (3',3'-c-di-AMP) and cyclic di-GMP (3',3'-c-di-GMP) second messengers produced by cGLRs in response to nucleotides in the cytosol, such as double-stranded RNA (dsRNA). Upon binding to 3'-3'-cGAMP, 3',3'-c-di-AMP or 3',3'-c-di-GMP, oligomerizes and promotes the recruitment and subsequent activation of the transcription factor IRF3 to induce expression of type I interferon. In Stylophora pistillata (Smooth cauliflower coral), this protein is Stimulator of interferon genes protein 3.